Consider the following 336-residue polypeptide: Holliday junction branch migration complex subunit RuvB (336 aa).

The interval Met1–Tyr182 is large ATPase domain (RuvB-L). ATP is bound by residues Leu21, Arg22, Gly63, Lys66, Thr67, Ser68, Glu129–Phe131, Arg172, Tyr182, and Arg219. Residue Thr67 coordinates Mg(2+). A small ATPAse domain (RuvB-S) region spans residues Ser183–Gly253. The interval Glu256–Phe336 is head domain (RuvB-H). DNA contacts are provided by Arg310 and Arg315.

This sequence belongs to the RuvB family. In terms of assembly, homohexamer. Forms an RuvA(8)-RuvB(12)-Holliday junction (HJ) complex. HJ DNA is sandwiched between 2 RuvA tetramers; dsDNA enters through RuvA and exits via RuvB. An RuvB hexamer assembles on each DNA strand where it exits the tetramer. Each RuvB hexamer is contacted by two RuvA subunits (via domain III) on 2 adjacent RuvB subunits; this complex drives branch migration. In the full resolvosome a probable DNA-RuvA(4)-RuvB(12)-RuvC(2) complex forms which resolves the HJ.

The protein localises to the cytoplasm. The catalysed reaction is ATP + H2O = ADP + phosphate + H(+). The RuvA-RuvB-RuvC complex processes Holliday junction (HJ) DNA during genetic recombination and DNA repair, while the RuvA-RuvB complex plays an important role in the rescue of blocked DNA replication forks via replication fork reversal (RFR). RuvA specifically binds to HJ cruciform DNA, conferring on it an open structure. The RuvB hexamer acts as an ATP-dependent pump, pulling dsDNA into and through the RuvAB complex. RuvB forms 2 homohexamers on either side of HJ DNA bound by 1 or 2 RuvA tetramers; 4 subunits per hexamer contact DNA at a time. Coordinated motions by a converter formed by DNA-disengaged RuvB subunits stimulates ATP hydrolysis and nucleotide exchange. Immobilization of the converter enables RuvB to convert the ATP-contained energy into a lever motion, pulling 2 nucleotides of DNA out of the RuvA tetramer per ATP hydrolyzed, thus driving DNA branch migration. The RuvB motors rotate together with the DNA substrate, which together with the progressing nucleotide cycle form the mechanistic basis for DNA recombination by continuous HJ branch migration. Branch migration allows RuvC to scan DNA until it finds its consensus sequence, where it cleaves and resolves cruciform DNA. The chain is Holliday junction branch migration complex subunit RuvB from Helicobacter pylori (strain Shi470).